The sequence spans 119 residues: Beta-2-microglobulin (119 aa).

A signal peptide spans 1-20 (MARSVVAALLVLLSLSGLEA). One can recognise an Ig-like C1-type domain in the interval 25 to 114 (PKIQVYSRHP…VTFPTPKTVK (90 aa)). A disulfide bridge links Cys45 with Cys100.

Belongs to the beta-2-microglobulin family. As to quaternary structure, heterodimer of an alpha chain and a beta chain. Beta-2-microglobulin is the beta-chain of major histocompatibility complex class I molecules.

The protein localises to the secreted. Its function is as follows. Component of the class I major histocompatibility complex (MHC). Involved in the presentation of peptide antigens to the immune system. The polypeptide is Beta-2-microglobulin (B2M) (Saimiri boliviensis boliviensis (Bolivian squirrel monkey)).